The primary structure comprises 75 residues: Exodeoxyribonuclease 7 small subunit (75 aa).

The protein belongs to the XseB family. Heterooligomer composed of large and small subunits.

Its subcellular location is the cytoplasm. The catalysed reaction is Exonucleolytic cleavage in either 5'- to 3'- or 3'- to 5'-direction to yield nucleoside 5'-phosphates.. Functionally, bidirectionally degrades single-stranded DNA into large acid-insoluble oligonucleotides, which are then degraded further into small acid-soluble oligonucleotides. This chain is Exodeoxyribonuclease 7 small subunit, found in Listeria monocytogenes serotype 4b (strain CLIP80459).